Here is a 385-residue protein sequence, read N- to C-terminus: Nonsense-mediated mRNA decay factor SMG9 (385 aa).

Residues M1–K32 are disordered.

Belongs to the SMG9 family.

Involved in nonsense-mediated decay (NMD) of mRNAs containing premature stop codons. Probable component of kinase complex containing smg-1 and recruited to stalled ribosomes. The chain is Nonsense-mediated mRNA decay factor SMG9 (smg-9) from Caenorhabditis elegans.